A 391-amino-acid polypeptide reads, in one-letter code: MAIINMSDLDLQGKRVLIREDLNVPVSNGVVTSDARLRASLPTIELALAKGAAVMVMSHLGRPTEGEYNPEYSMQPVVDYLAKALSCPVSLATDYLDGVDVAVGEVVVFENVRFNVGEGKNNEELSQKMAALCDVYVMDAFGTAHRAQASTHGVGMFAPIACAGPLLAQELDALGKALDNPARPMVAIVGGSKVSTKLTVLESLSGIVDQLVVGGGIANTFIAAAGYNVGKSLYEADLIDEAKRLVANAKSRGADIPVPTDVVVAGEFSPTAAATLKSVSEVADSEMIFDIGPDSAEALAKIIESAGTIVWNGPVGVFEFDQFGEGTKRIAQAIADSKAFSIAGGGDTLAAVDKYGIADKVSYISTGGGAFLEFLEGKELPAVAMLEKRGA.

Residues 21 to 23 (DLN), Arg36, 59 to 62 (HLGR), Arg113, and Arg146 each bind substrate. ATP is bound by residues Lys197, Glu319, and 345 to 348 (GGDT).

It belongs to the phosphoglycerate kinase family. Monomer.

The protein localises to the cytoplasm. The enzyme catalyses (2R)-3-phosphoglycerate + ATP = (2R)-3-phospho-glyceroyl phosphate + ADP. It participates in carbohydrate degradation; glycolysis; pyruvate from D-glyceraldehyde 3-phosphate: step 2/5. This chain is Phosphoglycerate kinase, found in Shewanella baltica (strain OS185).